Here is a 338-residue protein sequence, read N- to C-terminus: Ketol-acid reductoisomerase (NADP(+)) (338 aa).

Residues 1 to 181 form the KARI N-terminal Rossmann domain; the sequence is MKVYYDKDAD…GGTRGGVIET (181 aa). NADP(+)-binding positions include 24–27, Arg47, and Ser52; that span reads YGSQ. His107 is a catalytic residue. Gly133 contributes to the NADP(+) binding site. Residues 182–327 enclose the KARI C-terminal knotted domain; that stretch reads TFKEETETDL…SRLRDMMPWI (146 aa). Residues Asp190, Glu194, Glu226, and Glu230 each contribute to the Mg(2+) site. A substrate-binding site is contributed by Ser251.

The protein belongs to the ketol-acid reductoisomerase family. It depends on Mg(2+) as a cofactor.

The catalysed reaction is (2R)-2,3-dihydroxy-3-methylbutanoate + NADP(+) = (2S)-2-acetolactate + NADPH + H(+). It carries out the reaction (2R,3R)-2,3-dihydroxy-3-methylpentanoate + NADP(+) = (S)-2-ethyl-2-hydroxy-3-oxobutanoate + NADPH + H(+). It functions in the pathway amino-acid biosynthesis; L-isoleucine biosynthesis; L-isoleucine from 2-oxobutanoate: step 2/4. Its pathway is amino-acid biosynthesis; L-valine biosynthesis; L-valine from pyruvate: step 2/4. Functionally, involved in the biosynthesis of branched-chain amino acids (BCAA). Catalyzes an alkyl-migration followed by a ketol-acid reduction of (S)-2-acetolactate (S2AL) to yield (R)-2,3-dihydroxy-isovalerate. In the isomerase reaction, S2AL is rearranged via a Mg-dependent methyl migration to produce 3-hydroxy-3-methyl-2-ketobutyrate (HMKB). In the reductase reaction, this 2-ketoacid undergoes a metal-dependent reduction by NADPH to yield (R)-2,3-dihydroxy-isovalerate. The polypeptide is Ketol-acid reductoisomerase (NADP(+)) (Nitrosomonas eutropha (strain DSM 101675 / C91 / Nm57)).